Here is a 667-residue protein sequence, read N- to C-terminus: uncharacterized protein (667 aa).

This is an uncharacterized protein from Mycoplasma genitalium (strain ATCC 33530 / DSM 19775 / NCTC 10195 / G37) (Mycoplasmoides genitalium).